Here is a 56-residue protein sequence, read N- to C-terminus: MSRLFTLVLIVLAMNVMMAIISDPVVEAVGCEECPMHCKGKNANPTCDDGVCNCNV.

The signal sequence occupies residues 1 to 28 (MSRLFTLVLIVLAMNVMMAIISDPVVEA). 3 cysteine pairs are disulfide-bonded: cysteine 31-cysteine 47, cysteine 34-cysteine 52, and cysteine 38-cysteine 54.

In terms of tissue distribution, expressed by the venom gland.

The protein resides in the secreted. Blocks small conductance calcium-activated potassium channels (KCNN, SK). Low toxicity by intracerebroventricular injection into mice. The protein is Potassium channel toxin alpha-KTx 9.2 of Olivierus martensii (Manchurian scorpion).